The following is a 221-amino-acid chain: ATP phosphoribosyltransferase (221 aa).

The protein belongs to the ATP phosphoribosyltransferase family. Short subfamily. Heteromultimer composed of HisG and HisZ subunits.

It localises to the cytoplasm. The enzyme catalyses 1-(5-phospho-beta-D-ribosyl)-ATP + diphosphate = 5-phospho-alpha-D-ribose 1-diphosphate + ATP. It participates in amino-acid biosynthesis; L-histidine biosynthesis; L-histidine from 5-phospho-alpha-D-ribose 1-diphosphate: step 1/9. Catalyzes the condensation of ATP and 5-phosphoribose 1-diphosphate to form N'-(5'-phosphoribosyl)-ATP (PR-ATP). Has a crucial role in the pathway because the rate of histidine biosynthesis seems to be controlled primarily by regulation of HisG enzymatic activity. The chain is ATP phosphoribosyltransferase from Neisseria gonorrhoeae (strain ATCC 700825 / FA 1090).